A 295-amino-acid chain; its full sequence is MSKHIGIFGLGAMGTALAAKYLEHGYKTSVWNRTTAKAIPLVEQGAKLASTISEGVNANDLIIICLLNNQVVEDALRDALQTLPSKTIVNLTNGTPNQARKLADFVTSHGARYIHGGIMAVPTMIGSPHAVLLYSGESLELFQSIESHLSLLGMSKYLGTDAGSASLHDLALLSGMYGLFSGFLHAVALIKSGQDTSTTATGLLPLLTPWLSAMTGYLSSIAKQIDDGDYATQGSNLGMQLAGVENIIRAGEEQRVSSQMILPIKALIEQAVGEGHGGEDLSALIEYFKVGKNVD.

Residues 1 to 18 (MSKHIGIFGLGAMGTALA) form the signal peptide. An NADP(+)-binding site is contributed by 6 to 20 (GIFGLGAMGTALAAK).

This sequence belongs to the HIBADH-related family. In terms of assembly, homodimer. The cofactor is NADPH.

In terms of biological role, NADPH-dependent reductive aminase that catalyzes the reductive coupling of a broad set of carbonyl compounds with a variety of primary and secondary amines. Possesses remarkably high activity for the reductive amination of ketones and amines, often with high stereoselectivity and in some cases with ketone:amine ratios as low as 1:1. The cofactor NADPH, the carbonyl compound and the amine are added to the enzyme in that sequence, followed by the release of product, NADP(+) being released at last. RedAm is also able to act in the reverse, oxidative direction and exhibits activity in the dehydrogenation of amines to yield imines. The highest activity is found for 1-methyl-tetrahydroquinoline and acyclic amines are also found to be transformed. This Aspergillus oryzae (strain ATCC 42149 / RIB 40) (Yellow koji mold) protein is NADPH-dependent reductive aminase.